A 206-amino-acid chain; its full sequence is Thiamine-phosphate synthase (206 aa).

4-amino-2-methyl-5-(diphosphooxymethyl)pyrimidine is bound by residues 37-41 and asparagine 69; that span reads QYRNK. Mg(2+) is bound by residues aspartate 70 and aspartate 89. Residue serine 108 participates in 4-amino-2-methyl-5-(diphosphooxymethyl)pyrimidine binding. 135–137 serves as a coordination point for 2-[(2R,5Z)-2-carboxy-4-methylthiazol-5(2H)-ylidene]ethyl phosphate; sequence SST. Lysine 138 provides a ligand contact to 4-amino-2-methyl-5-(diphosphooxymethyl)pyrimidine. 2-[(2R,5Z)-2-carboxy-4-methylthiazol-5(2H)-ylidene]ethyl phosphate-binding positions include glycine 165 and 185–186; that span reads IS.

This sequence belongs to the thiamine-phosphate synthase family. Mg(2+) is required as a cofactor.

The enzyme catalyses 2-[(2R,5Z)-2-carboxy-4-methylthiazol-5(2H)-ylidene]ethyl phosphate + 4-amino-2-methyl-5-(diphosphooxymethyl)pyrimidine + 2 H(+) = thiamine phosphate + CO2 + diphosphate. It catalyses the reaction 2-(2-carboxy-4-methylthiazol-5-yl)ethyl phosphate + 4-amino-2-methyl-5-(diphosphooxymethyl)pyrimidine + 2 H(+) = thiamine phosphate + CO2 + diphosphate. The catalysed reaction is 4-methyl-5-(2-phosphooxyethyl)-thiazole + 4-amino-2-methyl-5-(diphosphooxymethyl)pyrimidine + H(+) = thiamine phosphate + diphosphate. Its pathway is cofactor biosynthesis; thiamine diphosphate biosynthesis; thiamine phosphate from 4-amino-2-methyl-5-diphosphomethylpyrimidine and 4-methyl-5-(2-phosphoethyl)-thiazole: step 1/1. Condenses 4-methyl-5-(beta-hydroxyethyl)thiazole monophosphate (THZ-P) and 2-methyl-4-amino-5-hydroxymethyl pyrimidine pyrophosphate (HMP-PP) to form thiamine monophosphate (TMP). This chain is Thiamine-phosphate synthase, found in Azoarcus sp. (strain BH72).